Reading from the N-terminus, the 1140-residue chain is Kinesin-like protein KIN-14O (1140 aa).

The span at 1 to 12 (MLESEFQREHAF) shows a compositional bias: basic and acidic residues. Disordered regions lie at residues 1-37 (MLES…ADDD), 50-81 (NPAE…DEDS), 161-217 (SPGS…GGHK), and 323-347 (ASGT…KEED). Low complexity predominate over residues 161-179 (SPGSSHGGSTPRSPFSPSS). The segment covering 180 to 193 (PRERHNKGLADSRF) has biased composition (basic and acidic residues). The span at 197–209 (LPNSSALDPSSPG) shows a compositional bias: polar residues. A coiled-coil region spans residues 327–546 (SEENETEKSK…KAKEMEEKSE (220 aa)). Positions 332–347 (TEKSKLEEKKKDKEED) are enriched in basic and acidic residues. One can recognise a Kinesin motor domain in the interval 632-952 (NIRVYCRVRP…LKFAERVSGV (321 aa)). 716–723 (GQTGSGKT) contributes to the ATP binding site. The segment covering 1002 to 1018 (LGQSDDFNSEAGDSQLS) has biased composition (polar residues). Disordered regions lie at residues 1002–1021 (LGQS…SIED) and 1028–1140 (DYTR…KRWS). Residues 1066–1078 (EGRKPLKISDKPK) show a composition bias toward basic and acidic residues. Polar residues predominate over residues 1099-1130 (TMRTTNIAKATSALLSPSSQGMKKTGSASNFL).

This sequence belongs to the TRAFAC class myosin-kinesin ATPase superfamily. Kinesin family. KIN-14 subfamily.

The sequence is that of Kinesin-like protein KIN-14O from Arabidopsis thaliana (Mouse-ear cress).